Consider the following 215-residue polypeptide: Probable transaldolase (215 aa).

Residue K83 is the Schiff-base intermediate with substrate of the active site.

The protein belongs to the transaldolase family. Type 3B subfamily.

Its subcellular location is the cytoplasm. It catalyses the reaction D-sedoheptulose 7-phosphate + D-glyceraldehyde 3-phosphate = D-erythrose 4-phosphate + beta-D-fructose 6-phosphate. Its pathway is carbohydrate degradation; pentose phosphate pathway; D-glyceraldehyde 3-phosphate and beta-D-fructose 6-phosphate from D-ribose 5-phosphate and D-xylulose 5-phosphate (non-oxidative stage): step 2/3. Its function is as follows. Transaldolase is important for the balance of metabolites in the pentose-phosphate pathway. This Methanococcus maripaludis (strain C6 / ATCC BAA-1332) protein is Probable transaldolase.